A 489-amino-acid polypeptide reads, in one-letter code: Rhamnulokinase (489 aa).

Position 13 to 17 (13 to 17 (ASSGR)) interacts with ATP. A disulfide bond links Cys-68 and Cys-222. Residues Gly-83 and 236–238 (HDT) each bind substrate. Asp-237 serves as the catalytic Proton acceptor. Thr-259 serves as a coordination point for ATP. Position 296 (Asn-296) interacts with substrate. Gln-304 contributes to the ATP binding site. A disulfide bridge links Cys-353 with Cys-370. An ATP-binding site is contributed by Gly-402. An intrachain disulfide couples Cys-413 to Cys-417.

The protein belongs to the rhamnulokinase family. Mg(2+) is required as a cofactor.

The catalysed reaction is L-rhamnulose + ATP = L-rhamnulose 1-phosphate + ADP + H(+). Its pathway is carbohydrate degradation; L-rhamnose degradation; glycerone phosphate from L-rhamnose: step 2/3. Functionally, involved in the catabolism of L-rhamnose (6-deoxy-L-mannose). Catalyzes the transfer of the gamma-phosphate group from ATP to the 1-hydroxyl group of L-rhamnulose to yield L-rhamnulose 1-phosphate. This is Rhamnulokinase from Salmonella paratyphi B (strain ATCC BAA-1250 / SPB7).